The following is a 388-amino-acid chain: Putative N(4)-(beta-N-acetylglucosaminyl)-L-asparaginase GL17147 (388 aa).

The N-terminal stretch at 1–20 (MYKAQYLWLFGLVLISRSAT) is a signal peptide. Intrachain disulfides connect Cys-94/Cys-99 and Cys-193/Cys-209. Thr-240 (nucleophile) is an active-site residue. Substrate-binding positions include 268–271 (RVGD) and 291–294 (TGDG). Cys-351 and Cys-378 are joined by a disulfide.

The protein belongs to the Ntn-hydrolase family. Heterotetramer of two alpha and two beta chains arranged as a dimer of alpha/beta heterodimers. Cleaved into an alpha and beta chain by autocatalysis; this activates the enzyme. The N-terminal residue of the beta subunit is responsible for the nucleophile hydrolase activity.

The enzyme catalyses N(4)-(beta-N-acetyl-D-glucosaminyl)-L-asparagine + H2O = N-acetyl-beta-D-glucosaminylamine + L-aspartate + H(+). Cleaves the GlcNAc-Asn bond which joins oligosaccharides to the peptide of asparagine-linked glycoproteins. The sequence is that of Putative N(4)-(beta-N-acetylglucosaminyl)-L-asparaginase GL17147 from Drosophila persimilis (Fruit fly).